A 201-amino-acid chain; its full sequence is Akirin (201 aa).

Positions Met-1–Leu-133 are disordered. Residues Pro-20–Cys-25 carry the Nuclear localization signal motif. Phosphoserine is present on residues Ser-39 and Ser-41. Composition is skewed to polar residues over residues Gly-44–Asn-57 and Glu-65–Ala-75. Position 67 is a phosphoserine (Ser-67). Over residues Ser-112–Glu-122 the composition is skewed to low complexity. Residues Ser-123 and Ser-129 each carry the phosphoserine modification.

Belongs to the akirin family. Interacts with dmap1. Interacts with bap60 and rel; interaction is immune stimulation-dependent; activates selected rel target gene promoters. Interacts with bap55; interaction is immune stimulation-dependent. Interacts with twi. In terms of processing, polyubiquitinated via 'Lys-63'-linked ubiquitin by Hyd, promoting interaction with rel. As to expression, ubiquitous.

The protein localises to the nucleus. Functionally, molecular adapter that acts as a bridge between a variety of multiprotein complexes, and which is required for embryonic development and for normal innate immune response. Acts as a regulator of embryonic myogenesis by bridging Twist (twi) with the SWI/SNF-like Brahma complex, promoting expression of twi-regulated genes during myogenesis. Effector of immune deficiency pathway (Imd) by acting either downstream of, or at the level of, the NF-kappa-B factor Relish (Rel). Acts by bridging the NF-kappa-B factor Rel and the Brahma complex through bap60 interaction, leading to activation a subset of NF-kappa-B factor Relish (Rel) effector genes. Not part of the Toll pathway. Required for the formation of the heart by promoting expression ot tinman (tin). The protein is Akirin of Drosophila melanogaster (Fruit fly).